We begin with the raw amino-acid sequence, 258 residues long: Acetylglutamate kinase (258 aa).

Substrate is bound by residues 41–42 (GG), Arg63, and Asn156.

This sequence belongs to the acetylglutamate kinase family. ArgB subfamily. In terms of assembly, homodimer.

It is found in the cytoplasm. It carries out the reaction N-acetyl-L-glutamate + ATP = N-acetyl-L-glutamyl 5-phosphate + ADP. It functions in the pathway amino-acid biosynthesis; L-arginine biosynthesis; N(2)-acetyl-L-ornithine from L-glutamate: step 2/4. Functionally, catalyzes the ATP-dependent phosphorylation of N-acetyl-L-glutamate. The protein is Acetylglutamate kinase of Geobacillus stearothermophilus (Bacillus stearothermophilus).